The primary structure comprises 688 residues: PTS system glucoside-specific EIICBA component (688 aa).

The 425-residue stretch at 3 to 427 (KKLFGQLQRI…FKLKTPGRED (425 aa)) folds into the PTS EIIC type-1 domain. Helical transmembrane passes span 12-32 (IGKA…LLAF), 81-101 (LGLA…YLIM), 137-157 (LVLG…MGAL), 182-202 (FVPI…SFAW), 223-243 (LTTF…LHHI), 284-304 (AFTT…AFAI), 315-335 (VVGG…ITEP), 340-360 (FLFV…TSFL), 364-384 (LLGV…ILYG), and 395-415 (LVIP…DFAI). Residues 438–519 (AKLPFDVLDA…AKIMSGEITK (82 aa)) enclose the PTS EIIB type-1 domain. Catalysis depends on Cys460, which acts as the Phosphocysteine intermediate; for EIIB activity. The 105-residue stretch at 560–664 (DQVFAGKMMG…SIVTPMIITN (105 aa)) folds into the PTS EIIA type-1 domain. His612 acts as the Tele-phosphohistidine intermediate; for EIIA activity in catalysis.

It localises to the cell membrane. Functionally, the phosphoenolpyruvate-dependent sugar phosphotransferase system (sugar PTS), a major carbohydrate active -transport system, catalyzes the phosphorylation of incoming sugar substrates concomitantly with their translocation across the cell membrane. This system is involved in alpha- and beta-glucoside transport. The chain is PTS system glucoside-specific EIICBA component (glcB) from Staphylococcus aureus (strain bovine RF122 / ET3-1).